The following is a 734-amino-acid chain: Cytoplasmic polyadenylation element-binding protein 3 (734 aa).

Disordered regions lie at residues 1 to 31 (MDRN…RNVP), 98 to 185 (GSKK…AARN), and 220 to 283 (RGSL…LPPR). Residues 16–26 (PAEHPGDEKSG) are compositionally biased toward basic and acidic residues. 2 stretches are compositionally biased toward low complexity: residues 121–140 (SRRT…SPSR) and 232–242 (KSFSSTTTSSS). The span at 243–256 (PEKEREKEKEKIEQ) shows a compositional bias: basic and acidic residues. The span at 259-275 (YGTTQRQSVNSQQSSAS) shows a compositional bias: polar residues. In terms of domain architecture, RRM spans 294–316 (IFVGGVPWDITEAALKDSFGEFG). Disordered stretches follow at residues 564-593 (KAYQ…SNNS) and 630-657 (TVYD…SNSN). A compositionally biased stretch (low complexity) spans 576–593 (LSSNSPSKARDGQNSNNS).

Its function is as follows. Cytoplasmic polyadenylation element binding protein that binds to and regulates the translation of specific mRNAs. The sequence is that of Cytoplasmic polyadenylation element-binding protein 3 (cpb-3) from Caenorhabditis japonica.